The primary structure comprises 275 residues: Monooxygenase af470 (275 aa).

The catalysed reaction is prefumagillin + NADPH + 2 O2 = fumagillin + acetaldehyde + NADP(+) + H2O. It functions in the pathway secondary metabolite biosynthesis; terpenoid biosynthesis. Its function is as follows. Monooxygenase; part of the gene cluster that mediates the biosynthesis of fumagillin, a meroterpenoid that has numerous biological activities including irreversible inhibition of human type 2 methionine aminopeptidase (METAP2). Within the pathway, the monooxygenase af470 catalyzes the oxidative cleavage of prefumagillin to yield the final compound of the pathway, fumagillin. The pathway begins with the conversion of farnesyl pyrophosphate (FPP) to beta-trans-bergamotene by the membrane-bound beta-trans-bergamotene synthase af520. The multifunctional cytochrome P450 monooxygenase af510 then converts beta-trans-bergamotene into 5-keto-demethoxyfumagillol via several oxydation steps. 5-keto-demethoxyfumagillol is then subjected to successive C-6 hydroxylation and O-methylation by the dioxygenase af480 and O-methyltransferase af390-400, respectively, to yield 5-keto-fumagillol, which is then stereoselectively reduced by the keto-reductase af490 to 5R-hydroxy-seco-sesquiterpene. The next step is the polyketide transferase af380-catalyzed transfer of a dodecapentaenoyl group synthesized by the polyketide synthase af370 onto 5R-hydroxy-seco-sesquiterpene which leads to the production of prefumagillin. Finally, oxidative cleavage by the monooxygenase af470 converts prefumagillin to fumagillin. This chain is Monooxygenase af470, found in Aspergillus fumigatus (strain ATCC MYA-4609 / CBS 101355 / FGSC A1100 / Af293) (Neosartorya fumigata).